Consider the following 138-residue polypeptide: Small ribosomal subunit protein bS16 (138 aa).

Residues 92–138 are disordered; sequence QAAKREADAKQAAKEAAEAKAAAEAEAKAAAEAESADAGAEEAPAEA. Basic and acidic residues predominate over residues 94 to 122; that stretch reads AKREADAKQAAKEAAEAKAAAEAEAKAAA.

Belongs to the bacterial ribosomal protein bS16 family.

The chain is Small ribosomal subunit protein bS16 from Synechococcus sp. (strain WH7803).